The chain runs to 189 residues: HTH-type transcriptional repressor LfrR (189 aa).

The region spanning 12–70 (ERTRRAILDAAMLVLADHPTAALGDIAAAAGVGRSTVHRYYPERTDLLRALARHVHDLS) is the HTH tetR-type domain. The H-T-H motif DNA-binding region spans 33-52 (ALGDIAAAAGVGRSTVHRYY). A proflavine binding region spans residues 70 to 71 (SN).

In terms of assembly, homodimer. Forms a structurally asymmetric homodimer exhibiting local unfolding and a blocked drug-binding site.

Repressor activity is regulated by binding of different substrates of the LfrA multidrug efflux pump, such as acriflavine, proflavine, ethidium bromide and rhodamine 123. Binding of these ligands causes the dissociation of LfrR from the promoter, inducing lfrA expression. In terms of biological role, represses the transcription of the lfrRA operon by binding directly to the promoter region of lfrR-lfrA. Binds specifically to a 143-bp region upstream of the lfrR gene. This Mycolicibacterium smegmatis (strain ATCC 700084 / mc(2)155) (Mycobacterium smegmatis) protein is HTH-type transcriptional repressor LfrR.